A 669-amino-acid chain; its full sequence is Dymeclin (669 aa).

Glycine 2 is lipidated: N-myristoyl glycine.

It belongs to the dymeclin family. As to quaternary structure, interacts with GOLM1 and PPIB. Post-translationally, myristoylated in vitro; myristoylation is not essential for protein targeting to Golgi compartment.

The protein localises to the cytoplasm. It is found in the golgi apparatus. Its subcellular location is the membrane. Necessary for correct organization of Golgi apparatus. Involved in bone development. This is Dymeclin (Dym) from Mus musculus (Mouse).